Here is a 371-residue protein sequence, read N- to C-terminus: Ferredoxin--NADP reductase, apicoplast (371 aa).

Residues 1–18 constitute an apicoplast transit peptide; the sequence is MKIRFVFILSVLISGVCC. Residues K68, 155–159, 172–179, 192–194, and T235 contribute to the FAD site; these read ARLYS, AIKIHKYE, and YCS. The 151-residue stretch at 68–218 folds into the FAD-binding FR-type domain; sequence KNPLKCKIVD…TGAHGYFNLP (151 aa). Position 174 (K174) interacts with NADP(+). Residues 272 to 273, S302, 313 to 315, and 341 to 343 contribute to the NADP(+) site; these read VY, YVQ, and HKS. FAD-binding residues include K342 and Y371.

It belongs to the ferredoxin--NADP reductase type 1 family. As to quaternary structure, monomer. Homodimer; disulfide linked. NADP binding accelerates formation of an inactive, disulfide-linked homodimer when the protein is exposed to air for 24 hours or more (in vitro); the physiological relevance of this is uncertain. FAD is required as a cofactor.

The protein resides in the plastid. It is found in the apicoplast. It catalyses the reaction 2 reduced [2Fe-2S]-[ferredoxin] + NADP(+) + H(+) = 2 oxidized [2Fe-2S]-[ferredoxin] + NADPH. May play a role in the terminal step of the DOXP/MEP pathway for isoprenoid precursor biosynthesis. The polypeptide is Ferredoxin--NADP reductase, apicoplast (Plasmodium falciparum (isolate 3D7)).